Here is a 474-residue protein sequence, read N- to C-terminus: MSKKLHIKTWGCQMNEYDSSKMADLLGEYQGYTLTEEAEEADILLLNTCSIREKAQEKVFHQLGRWKTLKDKNPDLIIGVGGCVASQEGKAIKDRAQCVDIIFGPQTLHRLPDMIDQVRRGEKAVIDVSFPEIEKFDRLPEPRAEGPTAFVSIMEGCSKYCSFCVVPYTRGEEVSRPSDDIILEIAQLAEQGVREVNLLGQNVNAYRGATHDGGICTFAELLRYVAAIDGIDRIRFTTSHPIEFTQDIIDVYEDTPELVSFLHLPVQSGSDRILTAMKRGHMAIEYKSIIRRLRKARPDIQISSDFIIGFPGETKEDFADTMKLIEDVAFDHSFSFIYSARPGTPAADLPDDVDMEEKKQRLAILQDRITQQAMRYSRHMMGTVQRILVEGPSVKNPMELRGRTENNRVVNFEGQPKHIGSFVDVEIVDVYTNSLRGKFIRGEDEMDLRRNLRPSDILAKHKQDDDLGVTQFKP.

An MTTase N-terminal domain is found at 3-120; the sequence is KKLHIKTWGC…LPDMIDQVRR (118 aa). Residues Cys12, Cys49, Cys83, Cys157, Cys161, and Cys164 each coordinate [4Fe-4S] cluster. In terms of domain architecture, Radical SAM core spans 143–375; it reads RAEGPTAFVS…QDRITQQAMR (233 aa). One can recognise a TRAM domain in the interval 378–441; the sequence is RHMMGTVQRI…TNSLRGKFIR (64 aa).

It belongs to the methylthiotransferase family. MiaB subfamily. Monomer. The cofactor is [4Fe-4S] cluster.

The protein resides in the cytoplasm. The catalysed reaction is N(6)-dimethylallyladenosine(37) in tRNA + (sulfur carrier)-SH + AH2 + 2 S-adenosyl-L-methionine = 2-methylsulfanyl-N(6)-dimethylallyladenosine(37) in tRNA + (sulfur carrier)-H + 5'-deoxyadenosine + L-methionine + A + S-adenosyl-L-homocysteine + 2 H(+). Functionally, catalyzes the methylthiolation of N6-(dimethylallyl)adenosine (i(6)A), leading to the formation of 2-methylthio-N6-(dimethylallyl)adenosine (ms(2)i(6)A) at position 37 in tRNAs that read codons beginning with uridine. This Shewanella sp. (strain ANA-3) protein is tRNA-2-methylthio-N(6)-dimethylallyladenosine synthase.